A 120-amino-acid chain; its full sequence is NAD(P)H-quinone oxidoreductase subunit 3, chloroplastic (120 aa).

A run of 3 helical transmembrane segments spans residues I9–G29, M64–V84, and V88–S108.

The protein belongs to the complex I subunit 3 family. NDH is composed of at least 16 different subunits, 5 of which are encoded in the nucleus.

It is found in the plastid. Its subcellular location is the chloroplast thylakoid membrane. The enzyme catalyses a plastoquinone + NADH + (n+1) H(+)(in) = a plastoquinol + NAD(+) + n H(+)(out). It carries out the reaction a plastoquinone + NADPH + (n+1) H(+)(in) = a plastoquinol + NADP(+) + n H(+)(out). NDH shuttles electrons from NAD(P)H:plastoquinone, via FMN and iron-sulfur (Fe-S) centers, to quinones in the photosynthetic chain and possibly in a chloroplast respiratory chain. The immediate electron acceptor for the enzyme in this species is believed to be plastoquinone. Couples the redox reaction to proton translocation, and thus conserves the redox energy in a proton gradient. This Nuphar advena (Common spatterdock) protein is NAD(P)H-quinone oxidoreductase subunit 3, chloroplastic.